The sequence spans 195 residues: Keratin-associated protein 4-11 (195 aa).

Repeat copies occupy residues 5–9 (CCGSV), 24–28 (CCRPS), 29–33 (CCETT), 34–38 (CCRTT), 44–48 (CCVSS), 49–53 (CCRPQ), 54–58 (CCQSV), 59–63 (CCQPT), 64–68 (CCRPR), 69–73 (CCISS), 74–78 (CCRPS), 79–83 (CCVSS), 84–88 (CCKPQ), 89–93 (CCQSM), 94–98 (CCQPT), 99–103 (CCRPR), 104–108 (CCISS), 109–113 (CCRPS), 114–118 (CCVSS), 119–123 (CCRPQ), 124–128 (CCQSV), 129–133 (CCQPT), 134–138 (CCHPS), 144–148 (CCRPS), 149–153 (CCESS), 154–158 (CCRPC), and 159–163 (CCLRP). Residues 5–163 (CCGSVCSHQG…CCRPCCCLRP (159 aa)) are 27 X 5 AA repeats of C-C-[GIKRQVHEL]-[SPTR]-[STVQRMC].

This sequence belongs to the KRTAP type 4 family. As to quaternary structure, interacts with hair keratins. Expressed in the hair follicles.

In terms of biological role, in the hair cortex, hair keratin intermediate filaments are embedded in an interfilamentous matrix, consisting of hair keratin-associated proteins (KRTAP), which are essential for the formation of a rigid and resistant hair shaft through their extensive disulfide bond cross-linking with abundant cysteine residues of hair keratins. The matrix proteins include the high-sulfur and high-glycine-tyrosine keratins. This is Keratin-associated protein 4-11 (KRTAP4-11) from Homo sapiens (Human).